Reading from the N-terminus, the 120-residue chain is NADH-quinone oxidoreductase subunit A (120 aa).

The next 3 helical transmembrane spans lie at 10-30 (ILVF…MGWF), 65-85 (VAIL…WAVV), and 89-109 (IGWF…VGFI).

The protein belongs to the complex I subunit 3 family. As to quaternary structure, NDH-1 is composed of 14 different subunits. Subunits NuoA, H, J, K, L, M, N constitute the membrane sector of the complex.

The protein localises to the cell inner membrane. The catalysed reaction is a quinone + NADH + 5 H(+)(in) = a quinol + NAD(+) + 4 H(+)(out). In terms of biological role, NDH-1 shuttles electrons from NADH, via FMN and iron-sulfur (Fe-S) centers, to quinones in the respiratory chain. The immediate electron acceptor for the enzyme in this species is believed to be ubiquinone. Couples the redox reaction to proton translocation (for every two electrons transferred, four hydrogen ions are translocated across the cytoplasmic membrane), and thus conserves the redox energy in a proton gradient. This Coxiella burnetii (strain Dugway 5J108-111) protein is NADH-quinone oxidoreductase subunit A.